The following is a 287-amino-acid chain: Urease accessory protein UreD (287 aa).

This sequence belongs to the UreD family. UreD, UreF and UreG form a complex that acts as a GTP-hydrolysis-dependent molecular chaperone, activating the urease apoprotein by helping to assemble the nickel containing metallocenter of UreC. The UreE protein probably delivers the nickel.

Its subcellular location is the cytoplasm. Required for maturation of urease via the functional incorporation of the urease nickel metallocenter. This Aliivibrio fischeri (strain ATCC 700601 / ES114) (Vibrio fischeri) protein is Urease accessory protein UreD.